The chain runs to 79 residues: D-alanyl carrier protein (79 aa).

A Carrier domain is found at 1–76 (MKEQIFDIIE…KIAARVQEKT (76 aa)). Ser-34 carries the O-(pantetheine 4'-phosphoryl)serine modification.

It belongs to the DltC family. In terms of processing, 4'-phosphopantetheine is transferred from CoA to a specific serine of apo-DCP.

It is found in the cytoplasm. It participates in cell wall biogenesis; lipoteichoic acid biosynthesis. Carrier protein involved in the D-alanylation of lipoteichoic acid (LTA). The loading of thioester-linked D-alanine onto DltC is catalyzed by D-alanine--D-alanyl carrier protein ligase DltA. The DltC-carried D-alanyl group is further transferred to cell membrane phosphatidylglycerol (PG) by forming an ester bond, probably catalyzed by DltD. D-alanylation of LTA plays an important role in modulating the properties of the cell wall in Gram-positive bacteria, influencing the net charge of the cell wall. This Lactococcus lactis subsp. cremoris (strain SK11) protein is D-alanyl carrier protein.